A 217-amino-acid chain; its full sequence is UPF0502 protein Sfri_1696 (217 aa).

It belongs to the UPF0502 family.

The sequence is that of UPF0502 protein Sfri_1696 from Shewanella frigidimarina (strain NCIMB 400).